The sequence spans 227 residues: MAYPMQLGFQDATSPIMEELLHFHDHTLMIVFLISSLVLYVISLMLTTKLTHTSTMDAQEVETIWTILPAIILILIALPSLRILYMMDEINNPSLTVKTMGHQWYWSYEYTDYEDLSFDSYMIPTSELKPGELRLLEVDNRVVLPMEMTIRMLISSEDVLHSWAVPSLGLKTDAIPGRLNQTTLMSARPGLYYGQCSEICGSNHSFMPIVLELVPLKYFEKWSASML.

Residues Met1–Ser14 lie on the Mitochondrial intermembrane side of the membrane. A helical transmembrane segment spans residues Pro15–Met45. Topologically, residues Leu46 to Gln59 are mitochondrial matrix. Residues Glu60–Met87 form a helical membrane-spanning segment. Topologically, residues Asp88 to Leu227 are mitochondrial intermembrane. 6 residues coordinate Cu cation: His161, Cys196, Glu198, Cys200, His204, and Met207. Glu198 is a binding site for Mg(2+).

This sequence belongs to the cytochrome c oxidase subunit 2 family. Component of the cytochrome c oxidase (complex IV, CIV), a multisubunit enzyme composed of 14 subunits. The complex is composed of a catalytic core of 3 subunits MT-CO1, MT-CO2 and MT-CO3, encoded in the mitochondrial DNA, and 11 supernumerary subunits COX4I, COX5A, COX5B, COX6A, COX6B, COX6C, COX7A, COX7B, COX7C, COX8 and NDUFA4, which are encoded in the nuclear genome. The complex exists as a monomer or a dimer and forms supercomplexes (SCs) in the inner mitochondrial membrane with NADH-ubiquinone oxidoreductase (complex I, CI) and ubiquinol-cytochrome c oxidoreductase (cytochrome b-c1 complex, complex III, CIII), resulting in different assemblies (supercomplex SCI(1)III(2)IV(1) and megacomplex MCI(2)III(2)IV(2)). Found in a complex with TMEM177, COA6, COX18, COX20, SCO1 and SCO2. Interacts with TMEM177 in a COX20-dependent manner. Interacts with COX20. Interacts with COX16. Cu cation serves as cofactor.

The protein localises to the mitochondrion inner membrane. The enzyme catalyses 4 Fe(II)-[cytochrome c] + O2 + 8 H(+)(in) = 4 Fe(III)-[cytochrome c] + 2 H2O + 4 H(+)(out). Component of the cytochrome c oxidase, the last enzyme in the mitochondrial electron transport chain which drives oxidative phosphorylation. The respiratory chain contains 3 multisubunit complexes succinate dehydrogenase (complex II, CII), ubiquinol-cytochrome c oxidoreductase (cytochrome b-c1 complex, complex III, CIII) and cytochrome c oxidase (complex IV, CIV), that cooperate to transfer electrons derived from NADH and succinate to molecular oxygen, creating an electrochemical gradient over the inner membrane that drives transmembrane transport and the ATP synthase. Cytochrome c oxidase is the component of the respiratory chain that catalyzes the reduction of oxygen to water. Electrons originating from reduced cytochrome c in the intermembrane space (IMS) are transferred via the dinuclear copper A center (CU(A)) of subunit 2 and heme A of subunit 1 to the active site in subunit 1, a binuclear center (BNC) formed by heme A3 and copper B (CU(B)). The BNC reduces molecular oxygen to 2 water molecules using 4 electrons from cytochrome c in the IMS and 4 protons from the mitochondrial matrix. This chain is Cytochrome c oxidase subunit 2 (MT-CO2), found in Gazella spekei (Speke's gazelle).